We begin with the raw amino-acid sequence, 328 residues long: D-cysteine desulfhydrase (328 aa).

An N6-(pyridoxal phosphate)lysine modification is found at Lys-51.

Belongs to the ACC deaminase/D-cysteine desulfhydrase family. In terms of assembly, homodimer. Requires pyridoxal 5'-phosphate as cofactor.

It carries out the reaction D-cysteine + H2O = hydrogen sulfide + pyruvate + NH4(+) + H(+). Its function is as follows. Catalyzes the alpha,beta-elimination reaction of D-cysteine and of several D-cysteine derivatives. It could be a defense mechanism against D-cysteine. This chain is D-cysteine desulfhydrase, found in Escherichia coli O157:H7.